A 297-amino-acid polypeptide reads, in one-letter code: Phosphatidylglycerol--prolipoprotein diacylglyceryl transferase (297 aa).

Transmembrane regions (helical) follow at residues 20–40 (FITI…GLFI), 57–77 (EILP…YVIF), 107–127 (WEGG…IIFF), and 133–153 (IHLK…QSIG). R154 contacts a 1,2-diacyl-sn-glycero-3-phospho-(1'-sn-glycerol). 3 helical membrane-spanning segments follow: residues 193 to 213 (PTFL…ILIF), 225 to 245 (GFIS…IEGL), and 266 to 286 (AQFI…FLRL).

Belongs to the Lgt family.

It localises to the cell inner membrane. The catalysed reaction is L-cysteinyl-[prolipoprotein] + a 1,2-diacyl-sn-glycero-3-phospho-(1'-sn-glycerol) = an S-1,2-diacyl-sn-glyceryl-L-cysteinyl-[prolipoprotein] + sn-glycerol 1-phosphate + H(+). Its pathway is protein modification; lipoprotein biosynthesis (diacylglyceryl transfer). Catalyzes the transfer of the diacylglyceryl group from phosphatidylglycerol to the sulfhydryl group of the N-terminal cysteine of a prolipoprotein, the first step in the formation of mature lipoproteins. This is Phosphatidylglycerol--prolipoprotein diacylglyceryl transferase from Prochlorococcus marinus (strain MIT 9301).